The following is a 467-amino-acid chain: tRNA modification GTPase MnmE (467 aa).

Positions 30, 92, and 131 each coordinate (6S)-5-formyl-5,6,7,8-tetrahydrofolate. The 163-residue stretch at 226 to 388 (GLKVAIIGRP…LEAAILNAVN (163 aa)) folds into the TrmE-type G domain. Asn-236 lines the K(+) pocket. Residues 236–241 (NVGKSS), 255–261 (TDLPGTT), and 280–283 (DTAG) each bind GTP. Ser-240 is a Mg(2+) binding site. The K(+) site is built by Thr-255, Leu-257, and Thr-260. Thr-261 serves as a coordination point for Mg(2+). A (6S)-5-formyl-5,6,7,8-tetrahydrofolate-binding site is contributed by Lys-467.

Belongs to the TRAFAC class TrmE-Era-EngA-EngB-Septin-like GTPase superfamily. TrmE GTPase family. In terms of assembly, homodimer. Heterotetramer of two MnmE and two MnmG subunits. Requires K(+) as cofactor.

It is found in the cytoplasm. Its function is as follows. Exhibits a very high intrinsic GTPase hydrolysis rate. Involved in the addition of a carboxymethylaminomethyl (cmnm) group at the wobble position (U34) of certain tRNAs, forming tRNA-cmnm(5)s(2)U34. The chain is tRNA modification GTPase MnmE from Trichodesmium erythraeum (strain IMS101).